A 126-amino-acid chain; its full sequence is Protein ApaG (126 aa).

The 125-residue stretch at 2–126 (SQLTSSVRVD…FRLSIPGLLH (125 aa)) folds into the ApaG domain.

The protein is Protein ApaG of Shewanella halifaxensis (strain HAW-EB4).